Reading from the N-terminus, the 231-residue chain is Large ribosomal subunit protein uL1 (231 aa).

Belongs to the universal ribosomal protein uL1 family. Part of the 50S ribosomal subunit.

Its function is as follows. Binds directly to 23S rRNA. The L1 stalk is quite mobile in the ribosome, and is involved in E site tRNA release. In terms of biological role, protein L1 is also a translational repressor protein, it controls the translation of the L11 operon by binding to its mRNA. The polypeptide is Large ribosomal subunit protein uL1 (Mycoplasmopsis agalactiae (strain NCTC 10123 / CIP 59.7 / PG2) (Mycoplasma agalactiae)).